The following is a 187-amino-acid chain: UPF0301 protein HSM_1900 (187 aa).

Belongs to the UPF0301 (AlgH) family.

In Histophilus somni (strain 2336) (Haemophilus somnus), this protein is UPF0301 protein HSM_1900.